The sequence spans 122 residues: Small ribosomal subunit protein uS13 (122 aa).

A disordered region spans residues 99–122 (RGQRTHTNARTRKGPAKAIAGKKK).

The protein belongs to the universal ribosomal protein uS13 family. In terms of assembly, part of the 30S ribosomal subunit. Forms a loose heterodimer with protein S19. Forms two bridges to the 50S subunit in the 70S ribosome.

Functionally, located at the top of the head of the 30S subunit, it contacts several helices of the 16S rRNA. In the 70S ribosome it contacts the 23S rRNA (bridge B1a) and protein L5 of the 50S subunit (bridge B1b), connecting the 2 subunits; these bridges are implicated in subunit movement. Contacts the tRNAs in the A and P-sites. This Rhizobium etli (strain ATCC 51251 / DSM 11541 / JCM 21823 / NBRC 15573 / CFN 42) protein is Small ribosomal subunit protein uS13.